The sequence spans 330 residues: Diacylglycerol acyltransferase/mycolyltransferase Ag85B (330 aa).

The N-terminal stretch at 1 to 40 is a signal peptide; that stretch reads MTDLSKKVRAWGRRLLVGTAAAVTLPGLIGLAGGAPTAGA. 82–83 serves as a coordination point for substrate; it reads LR. The interval 98–108 is fibronectin-binding; sequence FEWYYQSGLSI. Cysteine 127 and cysteine 132 are disulfide-bonded. 2 residues coordinate substrate: serine 166 and aspartate 194. Serine 166 functions as the Nucleophile in the catalytic mechanism. Glutamate 270 is a catalytic residue. Residues 272 to 275, lysine 279, and 302 to 304 contribute to the substrate site; these read FVRS and HSW. Residue histidine 302 is part of the active site.

This sequence belongs to the mycobacterial A85 antigen family.

It localises to the secreted. It catalyses the reaction 2 alpha,alpha'-trehalose 6-mycolate = alpha,alpha'-trehalose 6,6'-bismycolate + alpha,alpha-trehalose. It carries out the reaction an acyl-CoA + a 1,2-diacyl-sn-glycerol = a triacyl-sn-glycerol + CoA. Its function is as follows. The antigen 85 proteins (FbpA, FbpB, FbpC) are responsible for the high affinity of mycobacteria for fibronectin, a large adhesive glycoprotein, which facilitates the attachment of M.tuberculosis to murine alveolar macrophages (AMs). They also help to maintain the integrity of the cell wall by catalyzing the transfer of mycolic acids to cell wall arabinogalactan and through the synthesis of alpha,alpha-trehalose dimycolate (TDM, cord factor). They catalyze the transfer of a mycoloyl residue from one molecule of alpha,alpha-trehalose monomycolate (TMM) to another TMM, leading to the formation of TDM. This is Diacylglycerol acyltransferase/mycolyltransferase Ag85B (fbpB) from Mycobacterium scrofulaceum.